The primary structure comprises 761 residues: Prolyl endopeptidase FAP (761 aa).

Residues 1-4 (MKTW) lie on the Cytoplasmic side of the membrane. A helical; Signal-anchor for type II membrane protein transmembrane segment spans residues 5–25 (LKTVFGVTTLAALALVVICIV). At 26–761 (LRPSRVYKPE…FLKQCFSLSD (736 aa)) the chain is on the extracellular side. N-linked (GlcNAc...) asparagine glycosylation is found at N49, N92, and N99. Substrate is bound by residues E203 and E204. N-linked (GlcNAc...) asparagine glycans are attached at residues N227 and N314. 3 disulfide bridges follow: C321–C332, C438–C441, and C448–C466. S624 (charge relay system) is an active-site residue. C643 and C756 are oxidised to a cystine. N-linked (GlcNAc...) asparagine glycosylation occurs at N679. Residues D702 and H734 each act as charge relay system in the active site.

Belongs to the peptidase S9B family. Homodimer; homodimerization is required for activity of both plasma membrane and soluble forms. The monomer is inactive. Heterodimer with DPP4. Interacts with PLAUR; the interaction occurs at the cell surface of invadopodia membranes. Interacts with ITGB1. Interacts with ITGA3. Associates with integrin alpha-3/beta-1; the association occurs in a collagen-dependent manner at the cell surface of invadopodia membranes. N-glycosylated. Post-translationally, the N-terminus may be blocked. Expressed strongly in uterus, pancreas, submaxillary gland and skin, less in lymph node, ovary, skeletal muscle, adrenal and bone marrow. Expressed in reactive stromal fibroblast in epithelial cancers. Expressed in melanocytes but not melanomas (at protein level). Detected in fibroblasts, in placenta, uterus, embryos from day 7-19 and in newborn mice (P1).

The protein localises to the cell surface. The protein resides in the cell membrane. It is found in the cell projection. Its subcellular location is the lamellipodium membrane. It localises to the invadopodium membrane. The protein localises to the ruffle membrane. The protein resides in the membrane. It is found in the secreted. The enzyme catalyses Hydrolysis of Pro-|-Xaa &gt;&gt; Ala-|-Xaa in oligopeptides.. It catalyses the reaction Release of an N-terminal dipeptide, Xaa-Yaa-|-Zaa-, from a polypeptide, preferentially when Yaa is Pro, provided Zaa is neither Pro nor hydroxyproline.. Its activity is regulated as follows. Gelatinase activity is inhibited by serine-protease inhibitors, such as phenylmethylsulfonyl fluoride (PMSF), 4-(2-aminoethyl)-benzenesulfonyl fluoride hydrochloride (AEBSF), 4-amidino phenylsulfonyl fluoride (APSF) and diisopropyl fluorophosphate (DFP), N-ethylmaleimide (NEM) and phenylmethylsulfonyl fluoride (PMSF). Dipeptidyl peptidase activity is inhibited by 2,2'-azino-bis(3-ethylbenzthiazoline-6-sulfonic acid), diisopropylfluorophosphate (DFP). Prolyl endopeptidase activity is inhibited by the boronic acid peptide Ac-Gly-BoroPro, Ac-Gly-Pro-chloromethyl ketone and Thr-Ser-Gly-chloromethyl ketone. Functionally, cell surface glycoprotein serine protease that participates in extracellular matrix degradation and involved in many cellular processes including tissue remodeling, fibrosis, wound healing, inflammation and tumor growth. Both plasma membrane and soluble forms exhibit post-proline cleaving endopeptidase activity, with a marked preference for Ala/Ser-Gly-Pro-Ser/Asn/Ala consensus sequences, on substrate such as alpha-2-antiplasmin SERPINF2 and SPRY2. Degrade also gelatin, heat-denatured type I collagen, but not native collagen type I and IV, vibronectin, tenascin, laminin, fibronectin, fibrin or casein. Also has dipeptidyl peptidase activity, exhibiting the ability to hydrolyze the prolyl bond two residues from the N-terminus of synthetic dipeptide substrates provided that the penultimate residue is proline, with a preference for Ala-Pro, Ile-Pro, Gly-Pro, Arg-Pro and Pro-Pro. Natural neuropeptide hormones for dipeptidyl peptidase are the neuropeptide Y (NPY), peptide YY (PYY), substance P (TAC1) and brain natriuretic peptide 32 (NPPB). The plasma membrane form, in association with either DPP4, PLAUR or integrins, is involved in the pericellular proteolysis of the extracellular matrix (ECM), and hence promotes cell adhesion, migration and invasion through the ECM. Plays a role in tissue remodeling during development and wound healing. Participates in the cell invasiveness towards the ECM in malignant melanoma cancers. Enhances tumor growth progression by increasing angiogenesis, collagen fiber degradation and apoptosis and by reducing antitumor response of the immune system. Promotes glioma cell invasion through the brain parenchyma by degrading the proteoglycan brevican. Acts as a tumor suppressor in melanocytic cells through regulation of cell proliferation and survival in a serine protease activity-independent manner. The chain is Prolyl endopeptidase FAP from Mus musculus (Mouse).